A 264-amino-acid polypeptide reads, in one-letter code: 3-methyl-2-oxobutanoate hydroxymethyltransferase (264 aa).

Mg(2+)-binding residues include Asp45 and Asp84. 3-methyl-2-oxobutanoate-binding positions include 45–46, Asp84, and Lys112; that span reads DS. Glu114 contacts Mg(2+). Glu181 functions as the Proton acceptor in the catalytic mechanism.

This sequence belongs to the PanB family. As to quaternary structure, homodecamer; pentamer of dimers. Mg(2+) serves as cofactor.

The protein localises to the cytoplasm. The enzyme catalyses 3-methyl-2-oxobutanoate + (6R)-5,10-methylene-5,6,7,8-tetrahydrofolate + H2O = 2-dehydropantoate + (6S)-5,6,7,8-tetrahydrofolate. It functions in the pathway cofactor biosynthesis; (R)-pantothenate biosynthesis; (R)-pantoate from 3-methyl-2-oxobutanoate: step 1/2. Functionally, catalyzes the reversible reaction in which hydroxymethyl group from 5,10-methylenetetrahydrofolate is transferred onto alpha-ketoisovalerate to form ketopantoate. This chain is 3-methyl-2-oxobutanoate hydroxymethyltransferase, found in Escherichia coli O17:K52:H18 (strain UMN026 / ExPEC).